Here is a 168-residue protein sequence, read N- to C-terminus: Large ribosomal subunit protein uL10 (168 aa).

It belongs to the universal ribosomal protein uL10 family. As to quaternary structure, part of the ribosomal stalk of the 50S ribosomal subunit. The N-terminus interacts with L11 and the large rRNA to form the base of the stalk. The C-terminus forms an elongated spine to which L12 dimers bind in a sequential fashion forming a multimeric L10(L12)X complex.

Forms part of the ribosomal stalk, playing a central role in the interaction of the ribosome with GTP-bound translation factors. This is Large ribosomal subunit protein uL10 (rplJ) from Buchnera aphidicola subsp. Baizongia pistaciae (strain Bp).